The following is a 429-amino-acid chain: Trigger factor (429 aa).

Residues Gly-163 to Pro-248 form the PPIase FKBP-type domain.

The protein belongs to the FKBP-type PPIase family. Tig subfamily.

It localises to the cytoplasm. It carries out the reaction [protein]-peptidylproline (omega=180) = [protein]-peptidylproline (omega=0). In terms of biological role, involved in protein export. Acts as a chaperone by maintaining the newly synthesized protein in an open conformation. Functions as a peptidyl-prolyl cis-trans isomerase. This Halothermothrix orenii (strain H 168 / OCM 544 / DSM 9562) protein is Trigger factor.